The sequence spans 192 residues: NADH dehydrogenase [ubiquinone] iron-sulfur protein 3 (192 aa).

The protein belongs to the complex I 30 kDa subunit family. Complex I is composed of about 45 different subunits. This is a component of the iron-sulfur (IP) fragment of the enzyme.

The protein localises to the mitochondrion inner membrane. The enzyme catalyses a ubiquinone + NADH + 5 H(+)(in) = a ubiquinol + NAD(+) + 4 H(+)(out). Functionally, core subunit of the mitochondrial membrane respiratory chain NADH dehydrogenase (Complex I) that is believed to belong to the minimal assembly required for catalysis. Complex I functions in the transfer of electrons from NADH to the respiratory chain. The immediate electron acceptor for the enzyme is believed to be ubiquinone. This is NADH dehydrogenase [ubiquinone] iron-sulfur protein 3 (NAD9) from Beta trigyna (Caucasian wild beet).